A 2327-amino-acid chain; its full sequence is Nonribosomal peptide synthetase apmB (2327 aa).

The interval 214–605 (DTQAKSRPDS…GRKDMQIKLR (392 aa)) is adenylation 1. Residues 734 to 810 (EPATATGKVL…EMADACTKVI (77 aa)) form the Carrier 1 domain. At S771 the chain carries O-(pantetheine 4'-phosphoryl)serine. Residues 845-1259 (EDLYPCTAMQ…IFISSKDQES (415 aa)) form a condensation 1 region. The interval 1281–1675 (ERIAERPDHE…RRKDTQVKLR (395 aa)) is adenylation 2. The 77-residue stretch at 1816-1892 (PPTTDMQITM…AISAVAETLS (77 aa)) folds into the Carrier 2 domain. S1853 carries the post-translational modification O-(pantetheine 4'-phosphoryl)serine. The interval 1937–2260 (TDFQSLAING…VFQYQDFGGE (324 aa)) is condensation 2. Residues 2299–2327 (RVDLPRRPSPAGDTRDGPTAASDSPSRAR) are disordered.

This sequence belongs to the NRP synthetase family.

It carries out the reaction N-benzoyl-L-phenylalaninol + benzoate + L-phenylalanine + 2 ATP = asperphenamate + 2 AMP + 2 diphosphate + H(+). It participates in secondary metabolite biosynthesis. Functionally, nonribosomal peptide synthetase; part of the gene cluster that mediates the biosynthesis of asperphenamate, a rare linear amino acid ester that exhibits antitumor activity towards a number of cell lines. The structure of asperphenamate contains two subunits, N-benzoylphenylalanine and N-benzoylphenylalaninol, which are connected by an inter-molecular ester bond. The first step of asperphenamate biosynthesis is the generation of N-benzoylphenylalaninol by the nonribosomal peptide synthase apmA. Using phenylalanine and benzoic acid as substrates, apmA catalyzes amide bond formation and tethers the intermediate into the NRPS chain. Then, the terminal R domain of apmA catalyzes the reduction reaction to get the shunt product N-benzoylphenylalaninol. Subsequently, the nonribosomal peptide synthase apmB activates the same substrates as does apmA (phenylalanine and benzoic acid) to produce N-benzoylphenylalanine before condensing N-benzoylphenylalanine and N-benzoylphenylalaninol to release asperphenamate. This is Nonribosomal peptide synthetase apmB from Penicillium brevicompactum.